The chain runs to 818 residues: MDTIKRMLWPKKEIFVGTFATGVERDTSVDIFQLVCRVVLRYMRTGKIENNTDSLGNFIVELLKTDCAAKWEWFMKRRRVGDYAKSLAIASIPVIPLLSYATMKKTVALRAFGNELSFNIRVPRPSVPKKGLLLRLAAGLALAPICALAMYATLPREKLSVFKLRTEARAHMEDEREATDCLVVEPARELKGKDGEDLLTGSRMTKVIASTGRPRRRPYAAKIAQVARAKVGYLKNTPENRLIYQRVMIEIMDKDCVRYVDRDVILPLAIGCCFVYPDGVEESAALWGSDESLGVKXGGLVRLPGVVTQTNRDIPSGVLLPQEVLEVRAGPPNAKDRNIFMVAGCPSQARFLVHNHCLKNLKRGLVERVFCVERNGQLTRTPQPTKGAFGRLSPFRKAVCEKVGVAHRLGYDGFLSYYSGAKLRTYTRAVESLHITPVSERDSHLTTFVKAEKISTAKGDPAPRVIQPRNPRYNVELGRYLRHMESKLMKAVDGVFGETTCIKGYTADEVGQIFRDKWDRFNKPVAIGLDASRFDQHCSVEALQFEHGFYRAMYPGNKLLSKLLDWQLHNKGKGYVPDGTITYRKEGCRMSGDINTSLGNYLLMCAMIYGYMRHLGINEYSLANCGDDCVLIVERRNLKQIQGTLPEYFLNLGYTMKVEPPVFQLEEVEFCQAHPVQFQGGWKMVRNVRTAMSKDVHCVNNIRDLATRRAWSNAQHHGGVALTSGIPVVEKFYSRFTLYEVPKKHQRIDTVTNVHKWRGSGGDYVVTPEARASFWAAFGLTGDEQLALEDRLDRWEMDLFGEEGVDAHEPSILDSAVA.

Residues 524–641 (PVAIGLDASR…IVERRNLKQI (118 aa)) enclose the RdRp catalytic domain.

It belongs to the tombusviridae RNA polymerase family.

It carries out the reaction RNA(n) + a ribonucleoside 5'-triphosphate = RNA(n+1) + diphosphate. In terms of biological role, RNA-dependent RNA polymerase that plays an essential role in the virus replication. The sequence is that of RNA-directed RNA polymerase from Cucumis sativus (Cucumber).